Here is a 416-residue protein sequence, read N- to C-terminus: Tryptophan synthase beta chain (416 aa).

Residues 1–23 form a disordered region; sequence MTSTLPSQPKDMELANSSRPSVH. At lysine 109 the chain carries N6-(pyridoxal phosphate)lysine.

The protein belongs to the TrpB family. Tetramer of two alpha and two beta chains. Requires pyridoxal 5'-phosphate as cofactor.

It catalyses the reaction (1S,2R)-1-C-(indol-3-yl)glycerol 3-phosphate + L-serine = D-glyceraldehyde 3-phosphate + L-tryptophan + H2O. Its pathway is amino-acid biosynthesis; L-tryptophan biosynthesis; L-tryptophan from chorismate: step 5/5. Its function is as follows. The beta subunit is responsible for the synthesis of L-tryptophan from indole and L-serine. In Prochlorococcus marinus (strain MIT 9211), this protein is Tryptophan synthase beta chain.